The sequence spans 100 residues: Urease subunit gamma (100 aa).

The protein belongs to the urease gamma subunit family. In terms of assembly, heterotrimer of UreA (gamma), UreB (beta) and UreC (alpha) subunits. Three heterotrimers associate to form the active enzyme.

It is found in the cytoplasm. It carries out the reaction urea + 2 H2O + H(+) = hydrogencarbonate + 2 NH4(+). It participates in nitrogen metabolism; urea degradation; CO(2) and NH(3) from urea (urease route): step 1/1. The sequence is that of Urease subunit gamma from Trichormus variabilis (strain ATCC 29413 / PCC 7937) (Anabaena variabilis).